A 795-amino-acid polypeptide reads, in one-letter code: Histone acetyltransferase KAT2A (795 aa).

The segment covering 1–18 (MADPAAQSSAQPRLQQAQ) has biased composition (polar residues). The segment at 1–55 (MADPAAQSSAQPRLQQAQSSGPTGSNSNPGAGSSDPARPGLSQQQWSSQKKAQVR) is disordered. Positions 19 to 34 (SSGPTGSNSNPGAGSS) are enriched in low complexity. The region spanning 461-614 (VIGNSLSQKS…GATLMECELN (154 aa)) is the N-acetyltransferase domain. Glu533 functions as the Proton donor/acceptor in the catalytic mechanism. Acetyl-CoA contacts are provided by residues 537 to 539 (CAV), 544 to 550 (QVKGYGT), and Tyr575. Succinyl-CoA is bound by residues 537–539 (CAV), 544–550 (QVKGYGT), and Tyr575. The tract at residues 597–606 (LGYIKDYEGA) is loop 3. One can recognise a Bromo domain in the interval 686-790 (KDPDLLYNML…KFFYFKLKEA (105 aa)).

The protein belongs to the acetyltransferase family. GCN5 subfamily.

The protein localises to the nucleus. The protein resides in the chromosome. Its subcellular location is the cytoplasm. It localises to the cytoskeleton. It is found in the microtubule organizing center. The protein localises to the centrosome. The catalysed reaction is L-lysyl-[histone] + acetyl-CoA = N(6)-acetyl-L-lysyl-[histone] + CoA + H(+). It carries out the reaction L-lysyl-[protein] + acetyl-CoA = N(6)-acetyl-L-lysyl-[protein] + CoA + H(+). It catalyses the reaction succinyl-CoA + L-lysyl-[protein] = N(6)-succinyl-L-lysyl-[protein] + CoA + H(+). The enzyme catalyses glutaryl-CoA + L-lysyl-[protein] = N(6)-glutaryl-L-lysyl-[protein] + CoA + H(+). In terms of biological role, protein lysine acyltransferase that can act as a acetyltransferase, glutaryltransferasesucc, succinyltransferase or malonyltransferase, depending on the context. Acts as a histone lysine succinyltransferase: catalyzes succinylation of histone H3 on 'Lys-79' (H3K79succ), with a maximum frequency around the transcription start sites of genes. Succinylation of histones gives a specific tag for epigenetic transcription activation. Association with the 2-oxoglutarate dehydrogenase complex, which provides succinyl-CoA, is required for histone succinylation. In different complexes, functions either as an acetyltransferase (HAT) or as a succinyltransferase: in the SAGA and ATAC complexes, acts as a histone acetyltransferase. Has significant histone acetyltransferase activity with core histones, but not with nucleosome core particles. Has a a strong preference for acetylation of H3 at 'Lys-9' (H3K9ac). Acetylation of histones gives a specific tag for epigenetic transcription activation. Also acetylates non-histone proteins, such as tbx5. Involved in heart and limb development by mediating acetylation of tbx5. Together with kat2b, required for growth and differentiation of craniofacial cartilage and bone by regulating acetylation of histone H3 at 'Lys-9' (H3K9ac). Also acts as a histone glutaryltransferase: catalyzes glutarylation of histone H4 on 'Lys-91' (H4K91glu), a mark that destabilizes nucleosomes by promoting dissociation of the H2A-H2B dimers from nucleosomes. This is Histone acetyltransferase KAT2A from Danio rerio (Zebrafish).